The sequence spans 295 residues: Undecaprenyl-diphosphatase (295 aa).

A run of 7 helical transmembrane segments spans residues 12–34 (IAIAILQGATELFPVSSLGHAVV), 50–70 (FLPFLVFLHLGTAAALLLYFW), 95–115 (IFMLLVVATLPAIVVGGLLEH), 120–140 (LFESAPIAAFFLVVNGGLLLF), 209–229 (AHFSFLIALPIILGATVLEVP), 243–263 (TAALAAVAAGITAWLSTAFLM), and 272–292 (WALKPFAFYCIIAGLGALAWL).

Belongs to the UppP family.

Its subcellular location is the cell inner membrane. It catalyses the reaction di-trans,octa-cis-undecaprenyl diphosphate + H2O = di-trans,octa-cis-undecaprenyl phosphate + phosphate + H(+). Its function is as follows. Catalyzes the dephosphorylation of undecaprenyl diphosphate (UPP). Confers resistance to bacitracin. In Granulibacter bethesdensis (strain ATCC BAA-1260 / CGDNIH1), this protein is Undecaprenyl-diphosphatase.